A 283-amino-acid polypeptide reads, in one-letter code: Shikimate dehydrogenase (NADP(+)) (283 aa).

Shikimate is bound by residues 16–18 (SLS) and threonine 63. The Proton acceptor role is filled by lysine 67. An NADP(+)-binding site is contributed by aspartate 79. Residues asparagine 88 and aspartate 103 each coordinate shikimate. NADP(+) contacts are provided by residues 128 to 132 (GAGGA), alanine 223, and glycine 243.

The protein belongs to the shikimate dehydrogenase family. As to quaternary structure, homodimer.

The catalysed reaction is shikimate + NADP(+) = 3-dehydroshikimate + NADPH + H(+). Its pathway is metabolic intermediate biosynthesis; chorismate biosynthesis; chorismate from D-erythrose 4-phosphate and phosphoenolpyruvate: step 4/7. In terms of biological role, involved in the biosynthesis of the chorismate, which leads to the biosynthesis of aromatic amino acids. Catalyzes the reversible NADPH linked reduction of 3-dehydroshikimate (DHSA) to yield shikimate (SA). The polypeptide is Shikimate dehydrogenase (NADP(+)) (Xanthomonas campestris pv. campestris (strain 8004)).